A 143-amino-acid polypeptide reads, in one-letter code: Nucleoside diphosphate kinase (143 aa).

The ATP site is built by K10, F58, R86, T92, R103, and N113. The active-site Pros-phosphohistidine intermediate is the H116.

This sequence belongs to the NDK family. Homotetramer. Requires Mg(2+) as cofactor.

Its subcellular location is the cytoplasm. The catalysed reaction is a 2'-deoxyribonucleoside 5'-diphosphate + ATP = a 2'-deoxyribonucleoside 5'-triphosphate + ADP. It catalyses the reaction a ribonucleoside 5'-diphosphate + ATP = a ribonucleoside 5'-triphosphate + ADP. Functionally, major role in the synthesis of nucleoside triphosphates other than ATP. The ATP gamma phosphate is transferred to the NDP beta phosphate via a ping-pong mechanism, using a phosphorylated active-site intermediate. This chain is Nucleoside diphosphate kinase, found in Ehrlichia ruminantium (strain Welgevonden).